We begin with the raw amino-acid sequence, 339 residues long: Uroporphyrinogen decarboxylase (339 aa).

Residues 23–27, D72, Y147, T202, and H315 each bind substrate; that span reads RQAGR.

This sequence belongs to the uroporphyrinogen decarboxylase family. As to quaternary structure, homodimer.

Its subcellular location is the cytoplasm. The enzyme catalyses uroporphyrinogen III + 4 H(+) = coproporphyrinogen III + 4 CO2. The protein operates within porphyrin-containing compound metabolism; protoporphyrin-IX biosynthesis; coproporphyrinogen-III from 5-aminolevulinate: step 4/4. In terms of biological role, catalyzes the decarboxylation of four acetate groups of uroporphyrinogen-III to yield coproporphyrinogen-III. The chain is Uroporphyrinogen decarboxylase from Geotalea uraniireducens (strain Rf4) (Geobacter uraniireducens).